A 166-amino-acid polypeptide reads, in one-letter code: Lipoprotein signal peptidase (166 aa).

A run of 4 helical transmembrane segments spans residues 9 to 29, 45 to 65, 71 to 91, and 100 to 120; these read ASGA…FDQL, ALTS…FGFL, WQRW…CFLL, and FSVS…DRLV. Active-site residues include aspartate 126 and aspartate 144. Residues 135 to 155 form a helical membrane-spanning segment; that stretch reads WHFPAFNLADSAITVGAVLLI.

Belongs to the peptidase A8 family.

The protein localises to the cell inner membrane. The catalysed reaction is Release of signal peptides from bacterial membrane prolipoproteins. Hydrolyzes -Xaa-Yaa-Zaa-|-(S,diacylglyceryl)Cys-, in which Xaa is hydrophobic (preferably Leu), and Yaa (Ala or Ser) and Zaa (Gly or Ala) have small, neutral side chains.. It participates in protein modification; lipoprotein biosynthesis (signal peptide cleavage). Functionally, this protein specifically catalyzes the removal of signal peptides from prolipoproteins. In Burkholderia cenocepacia (strain HI2424), this protein is Lipoprotein signal peptidase.